A 209-amino-acid polypeptide reads, in one-letter code: Ribosomal RNA large subunit methyltransferase E (209 aa).

5 residues coordinate S-adenosyl-L-methionine: glycine 63, tryptophan 65, aspartate 83, aspartate 99, and aspartate 124. Lysine 164 (proton acceptor) is an active-site residue.

This sequence belongs to the class I-like SAM-binding methyltransferase superfamily. RNA methyltransferase RlmE family.

Its subcellular location is the cytoplasm. The catalysed reaction is uridine(2552) in 23S rRNA + S-adenosyl-L-methionine = 2'-O-methyluridine(2552) in 23S rRNA + S-adenosyl-L-homocysteine + H(+). Its function is as follows. Specifically methylates the uridine in position 2552 of 23S rRNA at the 2'-O position of the ribose in the fully assembled 50S ribosomal subunit. This Shewanella frigidimarina (strain NCIMB 400) protein is Ribosomal RNA large subunit methyltransferase E.